A 280-amino-acid chain; its full sequence is Putative pyruvate, phosphate dikinase regulatory protein (280 aa).

ADP is bound at residue 149 to 156 (GVSRSSKT).

This sequence belongs to the pyruvate, phosphate/water dikinase regulatory protein family. PDRP subfamily.

It carries out the reaction N(tele)-phospho-L-histidyl/L-threonyl-[pyruvate, phosphate dikinase] + ADP = N(tele)-phospho-L-histidyl/O-phospho-L-threonyl-[pyruvate, phosphate dikinase] + AMP + H(+). The catalysed reaction is N(tele)-phospho-L-histidyl/O-phospho-L-threonyl-[pyruvate, phosphate dikinase] + phosphate + H(+) = N(tele)-phospho-L-histidyl/L-threonyl-[pyruvate, phosphate dikinase] + diphosphate. Bifunctional serine/threonine kinase and phosphorylase involved in the regulation of the pyruvate, phosphate dikinase (PPDK) by catalyzing its phosphorylation/dephosphorylation. This Novosphingobium aromaticivorans (strain ATCC 700278 / DSM 12444 / CCUG 56034 / CIP 105152 / NBRC 16084 / F199) protein is Putative pyruvate, phosphate dikinase regulatory protein.